Consider the following 910-residue polypeptide: Staphylococcal nuclease domain-containing protein 1 (910 aa).

Ala-2 is modified (N-acetylalanine). 3 consecutive TNase-like domains span residues 18 to 166, 193 to 328, and 341 to 496; these read TVQR…MWSE, KPVN…IWRD, and KQFV…LHSK. The residue at position 103 (Thr-103) is a Phosphothreonine. Lys-193 carries the N6-acetyllysine modification. 2 positions are modified to phosphothreonine: Thr-235 and Thr-240. 2 short sequence motifs (nuclear localization signal) span residues 321-325 and 388-392; these read RRLRI and KKLRP. Ser-426 bears the Phosphoserine mark. Lys-513 participates in a covalent cross-link: Glycyl lysine isopeptide (Lys-Gly) (interchain with G-Cter in SUMO2). One can recognise a TNase-like 4 domain in the interval 525–660; sequence GRSEAVVEYV…KQRKEKVWAH (136 aa). At Lys-641 the chain carries N6-acetyllysine. Ser-645 bears the Phosphoserine mark. Positions 729 to 787 constitute a Tudor domain; sequence APRRGEFCIAKFVDGEWYRARVEKVESPAKVHVFYIDYGNREILPSTRLGTLPPAFSTR. Thr-779 is subject to Phosphothreonine. Residues Ser-785 and Ser-909 each carry the phosphoserine modification.

In terms of assembly, forms a ternary complex with STAT6 and POLR2A. Associates with the RNA-induced silencing complex (RISC). Interacts with the RISC components AGO2, FMR1 and TNRC6A. Interacts with GTF2E1 and GTF2E2. Interacts with PIM1. Interacts with STAT5. Interacts with SYT11 (via C2 2 domain); the interaction with SYT11 is direct. Post-translationally, phosphorylated by PIM1 in vitro.

The protein resides in the cytoplasm. It is found in the nucleus. It localises to the melanosome. It carries out the reaction Endonucleolytic cleavage to nucleoside 3'-phosphates and 3'-phosphooligonucleotide end-products.. In terms of biological role, endonuclease that mediates miRNA decay of both protein-free and AGO2-loaded miRNAs. As part of its function in miRNA decay, regulates mRNAs involved in G1-to-S phase transition. Functions as a bridging factor between STAT6 and the basal transcription factor. Plays a role in PIM1 regulation of MYB activity. Functions as a transcriptional coactivator for STAT5. The chain is Staphylococcal nuclease domain-containing protein 1 (Snd1) from Mus musculus (Mouse).